We begin with the raw amino-acid sequence, 340 residues long: Cytosolic Fe-S cluster assembly factor NBP35 (340 aa).

Positions 1–41 are disordered; sequence MPSLVDPVANKTDEGNNRTDLKAPEPEHCPGTESEEAGKAD. A compositionally biased stretch (basic and acidic residues) spans 11–30; sequence KTDEGNNRTDLKAPEPEHCP. [4Fe-4S] cluster-binding residues include Cys-29, Cys-43, Cys-46, and Cys-52. An ATP-binding site is contributed by 82–89; it reads GKGGVGKS. Positions 255 and 258 each coordinate [4Fe-4S] cluster.

The protein belongs to the Mrp/NBP35 ATP-binding proteins family. NUBP1/NBP35 subfamily. In terms of assembly, heterotetramer of 2 NBP35 and 2 CFD1 chains. Requires [4Fe-4S] cluster as cofactor.

The protein localises to the cytoplasm. The protein resides in the nucleus. In terms of biological role, component of the cytosolic iron-sulfur (Fe/S) protein assembly (CIA) machinery. Required for maturation of extramitochondrial Fe-S proteins. The NBP35-CFD1 heterotetramer forms a Fe-S scaffold complex, mediating the de novo assembly of an Fe-S cluster and its transfer to target apoproteins. Required for biogenesis and export of both ribosomal subunits, which may reflect a role in assembly of the Fe/S clusters in RLI1, a protein which performs rRNA processing and ribosome export. This is Cytosolic Fe-S cluster assembly factor NBP35 from Yarrowia lipolytica (strain CLIB 122 / E 150) (Yeast).